A 488-amino-acid chain; its full sequence is Integrin beta-like protein 1 (488 aa).

The signal sequence occupies residues 1–21 (MHAGAFINFVWALSLVSLLAA). Disulfide bonds link C38/C65, C49/C63, C57/C68, C70/C83, C85/C106, C90/C104, C98/C109, C111/C120, C126/C153, C137/C151, C145/C156, C158/C172, C174/C196, C179/C194, C188/C199, C201/C210, C214/C241, C225/C239, C233/C244, C246/C263, C265/C290, C270/C288, C282/C293, C295/C304, C310/C337, C321/C335, C329/C340, C342/C355, C357/C378, C362/C376, C370/C381, C383/C392, C398/C425, C409/C423, C417/C428, C430/C442, C444/C465, C449/C463, C457/C468, and C470/C479. I-EGF domains lie at 38-84 (CRLP…PLCE), 85-121 (CHDWVCHTYDGQVCAGHGQCDCGVCKCDVGWSGEACQ), 126-173 (CDLT…KYCE), 174-211 (CDDTECFDDETQEICGGHGKCYCGNCYCEAGWHGDKCE), 214-264 (CDIT…DTCE), 265-305 (CDER…RKCE), 310-356 (CALS…KNCE), 357-393 (CDDRQCEDLEGKICGEHGTCSCGRCICEAGWFGKLCQ), 398-443 (CNMT…EFCE), and 444-480 (CDDRDCDKHDGLICTGNGICNCGNCECWEGWNGNACE). The I repeat unit spans residues 49–89 (CRTPDGSICSGRGSCDCGICLCEVKEAGKYYGPLCECHDWV). The segment at 49–488 (CRTPDGSICS…CEIWLGSEYP (440 aa)) is cysteine-rich tandem repeats. One copy of the II repeat lies at 90–136 (CHTYDGQVCAGHGQCDCGVCKCDVGWSGEACQYPTTCDLTRKKSNEM). Residues 137–178 (CKNSQAVICSNAGTCQCGRCKCENSDNSGLIYGKYCECDDTE) form an III repeat. An IV repeat occupies 179 to 224 (CFDDETQEICGGHGKCYCGNCYCEAGWHGDKCEFQCDITPWEIKKR). The V repeat unit spans residues 225 to 269 (CTSPDGKICSNRGTCVCGECTCHDVDPTGDWGDIHGDTCECDERN). A VI repeat occupies 270 to 320 (CKSVYDRYSDDFCSGHGQCNCGRCDCKDGWTGRKCEHPRACALSIEESKKK). The stretch at 321–361 (CQGSASQPCSGRGKCECGQCTCFPPGDSKVYGKNCECDDRQ) is one VII repeat. Residues 362 to 408 (CEDLEGKICGEHGTCSCGRCICEAGWFGKLCQHERKCNMTEEESKSQ) form a VIII repeat. N-linked (GlcNAc...) asparagine glycosylation occurs at N399. Residues 409–448 (CESDDGILCSGKGSCHCGKCICSPQEWYVSGEFCECDDRD) form an IX repeat. The stretch at 449–488 (CDKHDGLICTGNGICNCGNCECWEGWNGNACEIWLGSEYP) is one X repeat.

The protein resides in the secreted. In Xenopus laevis (African clawed frog), this protein is Integrin beta-like protein 1 (itgbl1).